Here is a 309-residue protein sequence, read N- to C-terminus: Acetylglutamate kinase (309 aa).

Residues 69 to 70 (GG), Arg-91, and Asn-194 contribute to the substrate site.

The protein belongs to the acetylglutamate kinase family. ArgB subfamily.

The protein resides in the cytoplasm. The enzyme catalyses N-acetyl-L-glutamate + ATP = N-acetyl-L-glutamyl 5-phosphate + ADP. It functions in the pathway amino-acid biosynthesis; L-arginine biosynthesis; N(2)-acetyl-L-ornithine from L-glutamate: step 2/4. In terms of biological role, catalyzes the ATP-dependent phosphorylation of N-acetyl-L-glutamate. The polypeptide is Acetylglutamate kinase (Vesicomyosocius okutanii subsp. Calyptogena okutanii (strain HA)).